The chain runs to 266 residues: 4-diphosphocytidyl-2-C-methyl-D-erythritol kinase (266 aa).

Residue K11 is part of the active site. An ATP-binding site is contributed by 103–113; the sequence is PTFAGLGGGSS. D145 is a catalytic residue.

The protein belongs to the GHMP kinase family. IspE subfamily.

It catalyses the reaction 4-CDP-2-C-methyl-D-erythritol + ATP = 4-CDP-2-C-methyl-D-erythritol 2-phosphate + ADP + H(+). It participates in isoprenoid biosynthesis; isopentenyl diphosphate biosynthesis via DXP pathway; isopentenyl diphosphate from 1-deoxy-D-xylulose 5-phosphate: step 3/6. Functionally, catalyzes the phosphorylation of the position 2 hydroxy group of 4-diphosphocytidyl-2C-methyl-D-erythritol. In Sulfurimonas denitrificans (strain ATCC 33889 / DSM 1251) (Thiomicrospira denitrificans (strain ATCC 33889 / DSM 1251)), this protein is 4-diphosphocytidyl-2-C-methyl-D-erythritol kinase.